Here is a 103-residue protein sequence, read N- to C-terminus: Large ribosomal subunit protein bL21 (103 aa).

Belongs to the bacterial ribosomal protein bL21 family. In terms of assembly, part of the 50S ribosomal subunit. Contacts protein L20.

In terms of biological role, this protein binds to 23S rRNA in the presence of protein L20. The polypeptide is Large ribosomal subunit protein bL21 (Photobacterium profundum (strain SS9)).